The chain runs to 345 residues: Photosystem II protein D1 (345 aa).

The next 3 helical transmembrane spans lie at Tyr30–Thr47, His119–Leu134, and Trp143–Ala157. Chlorophyll a is bound at residue His119. A pheophytin a-binding site is contributed by Tyr127. Residues Asp171 and Glu190 each coordinate [CaMn4O5] cluster. The helical transmembrane segment at Phe198–Leu219 threads the bilayer. His199 lines the chlorophyll a pocket. Residues His216 and Ser265–Phe266 each bind a quinone. Fe cation is bound at residue His216. Fe cation is bound at residue His273. Residues Phe275 to Leu289 traverse the membrane as a helical segment. [CaMn4O5] cluster-binding residues include His333, Glu334, Asp343, and Ala345.

This sequence belongs to the reaction center PufL/M/PsbA/D family. In terms of assembly, PSII is composed of 1 copy each of membrane proteins PsbA, PsbB, PsbC, PsbD, PsbE, PsbF, PsbH, PsbI, PsbJ, PsbK, PsbL, PsbM, PsbT, PsbY, PsbZ, Psb30/Ycf12, at least 3 peripheral proteins of the oxygen-evolving complex and a large number of cofactors. It forms dimeric complexes. It depends on The D1/D2 heterodimer binds P680, chlorophylls that are the primary electron donor of PSII, and subsequent electron acceptors. It shares a non-heme iron and each subunit binds pheophytin, quinone, additional chlorophylls, carotenoids and lipids. D1 provides most of the ligands for the Mn4-Ca-O5 cluster of the oxygen-evolving complex (OEC). There is also a Cl(-1) ion associated with D1 and D2, which is required for oxygen evolution. The PSII complex binds additional chlorophylls, carotenoids and specific lipids. as a cofactor. Tyr-162 forms a radical intermediate that is referred to as redox-active TyrZ, YZ or Y-Z.

It localises to the plastid. The protein localises to the chloroplast thylakoid membrane. The catalysed reaction is 2 a plastoquinone + 4 hnu + 2 H2O = 2 a plastoquinol + O2. In terms of biological role, photosystem II (PSII) is a light-driven water:plastoquinone oxidoreductase that uses light energy to abstract electrons from H(2)O, generating O(2) and a proton gradient subsequently used for ATP formation. It consists of a core antenna complex that captures photons, and an electron transfer chain that converts photonic excitation into a charge separation. The D1/D2 (PsbA/PsbD) reaction center heterodimer binds P680, the primary electron donor of PSII as well as several subsequent electron acceptors. The polypeptide is Photosystem II protein D1 (Euglena gracilis).